A 252-amino-acid polypeptide reads, in one-letter code: Trans-aconitate 2-methyltransferase (252 aa).

Belongs to the methyltransferase superfamily. Tam family.

Its subcellular location is the cytoplasm. It catalyses the reaction trans-aconitate + S-adenosyl-L-methionine = (E)-3-(methoxycarbonyl)pent-2-enedioate + S-adenosyl-L-homocysteine. Catalyzes the S-adenosylmethionine monomethyl esterification of trans-aconitate. The sequence is that of Trans-aconitate 2-methyltransferase from Enterobacter sp. (strain 638).